The primary structure comprises 552 residues: Arginine--tRNA ligase (552 aa).

A 'HIGH' region motif is present at residues 129-139 (ANPTGPVTLAS).

This sequence belongs to the class-I aminoacyl-tRNA synthetase family. In terms of assembly, monomer.

The protein resides in the cytoplasm. It carries out the reaction tRNA(Arg) + L-arginine + ATP = L-arginyl-tRNA(Arg) + AMP + diphosphate. The polypeptide is Arginine--tRNA ligase (Frankia alni (strain DSM 45986 / CECT 9034 / ACN14a)).